The following is a 242-amino-acid chain: Putative serine/threonine-protein kinase (242 aa).

The Protein kinase domain maps to 49–242 (FSSKNKVGEG…KSDVYSFGVL (194 aa)). Residues 55 to 63 (VGEGGCGAV) and K77 contribute to the ATP site. D177 functions as the Proton acceptor in the catalytic mechanism.

The protein belongs to the protein kinase superfamily. Ser/Thr protein kinase family.

The enzyme catalyses L-seryl-[protein] + ATP = O-phospho-L-seryl-[protein] + ADP + H(+). It carries out the reaction L-threonyl-[protein] + ATP = O-phospho-L-threonyl-[protein] + ADP + H(+). This Helianthus annuus (Common sunflower) protein is Putative serine/threonine-protein kinase.